The sequence spans 137 residues: Putative pre-16S rRNA nuclease (137 aa).

Belongs to the YqgF nuclease family.

The protein resides in the cytoplasm. Functionally, could be a nuclease involved in processing of the 5'-end of pre-16S rRNA. The sequence is that of Putative pre-16S rRNA nuclease from Bacillus cereus (strain AH187).